The following is a 540-amino-acid chain: DM7 family protein GM11956 (540 aa).

Positions 416–443 (ATDTRGRDEIRTSCDQPQEKDEGSAEAD) are disordered. Residues 417 to 443 (TDTRGRDEIRTSCDQPQEKDEGSAEAD) are compositionally biased toward basic and acidic residues.

It belongs to the DM7 family.

This Drosophila sechellia (Fruit fly) protein is DM7 family protein GM11956.